Reading from the N-terminus, the 483-residue chain is MYSATASNTFFLLSCFLLFCLLSAPSCVSMFSGIETGDLEKRDDLFPQILRDEAVARLYELGKVSDASGYLERTFLSPASMKAIDLIRKWMEDAGLRTWVDQMGNVHGRVDGANENAEALLIGSHMDTVVDAGMFDGSLGIVSAISAVKAMHVNGKLQKLKRPVEVIAFSDEEGVRFQTTFLGSGAIAGILPGTTLEISDKREVMIKDFLKENSMDITEESLLKLKYDPKSVWGYVEVHIEQGPVLEQVGFPLGVVKGIAGQTRLKVTVRGSQGHAGTVPMSMRQDPMAAAAEQIVVLESLCKHPEEYLSYDGHCSDSTVKSLSSSLVCTVGEISTWPSASNVIPGQVTYTVDIRAIDDLGREAVIYDLSKQIYQICDKRSVSCIIEHKHDAGAVICDSDLSSQLKSAAYSALKKMEGDIQDEVPTLMSGAGHDAMAISHLTKVGMLFVRCRGGISHSPQEHVLDNDVWAAGLATLSFLENLS.

Positions 1 to 30 are cleaved as a signal peptide; sequence MYSATASNTFFLLSCFLLFCLLSAPSCVSM. Residues H125, D136, E173, H239, and H457 each contribute to the Mn(2+) site.

This sequence belongs to the peptidase M20A family. As to quaternary structure, homodimer. It depends on Mn(2+) as a cofactor. In terms of tissue distribution, expressed in roots, stems and leaves. Not detected in nodules.

Its subcellular location is the endoplasmic reticulum. The enzyme catalyses allantoate + H2O + 2 H(+) = (S)-2-ureidoglycine + NH4(+) + CO2. Its activity is regulated as follows. Inhibited by borate, fluoride, L-Asn and L-Asp. Functionally, involved in the catabolism of purine nucleotides. Can use allantoate as substrate. The sequential activity of AAH, UGLYAH and UAH allows a complete purine breakdown without the intermediate generation of urea. This chain is Allantoate deiminase 1, found in Glycine max (Soybean).